An 823-amino-acid polypeptide reads, in one-letter code: Protein Jade-3 (823 aa).

Positions 1–40 (MKRHRPVSSSESSDECPSTSFTSSSMYRKKSKNPKEQKKS) are disordered. Positions 8–20 (SSSESSDECPSTS) are enriched in low complexity. Lys30, Lys32, and Lys35 each carry N6-acetyllysine. The segment at 200-250 (DVICDVCRSPDSEEGNDMVFCDKCNVCVHQACYGILKIPEGSWLCRSCVLG) adopts a PHD-type 1 zinc-finger fold. The segment at 252–286 (YPQCVLCPKKGGAMKTTRTGTKWAHVSCALWIPEV) adopts a C2HC pre-PHD-type zinc-finger fold. A PHD-type 2 zinc finger spans residues 310–366 (LVCNLCKLKTGACIQCSVKSCITAFHVTCAFEHGLEMKTILDEGDEVKFKSFCLKHS). Disordered stretches follow at residues 543 to 585 (LKMP…PEEP) and 601 to 631 (KSNC…AEFY). Residues 549–562 (TSEDCKDSSTETEH) are compositionally biased toward basic and acidic residues. Residues Ser566 and Ser578 each carry the phosphoserine modification. Lys601 is subject to N6-acetyllysine. Ser608 carries the phosphoserine modification. The residue at position 638 (Lys638) is an N6-acetyllysine. A disordered region spans residues 651–676 (SIGNGKNQPNSRVSSSNGLEGNWSGN). Lys735 is modified (N6-acetyllysine). The interval 756–823 (TGRASYQETD…HPHSHSSMQR (68 aa)) is disordered. Ser774 and Ser776 each carry phosphoserine. The segment covering 781–809 (EGSKETPRVKRESSDRENPSHDSARECHG) has biased composition (basic and acidic residues).

The protein belongs to the JADE family. In terms of assembly, component of the HBO1 complex composed at least of ING4 or ING5, MYST2/HBO1, MEAF6, and one of JADE1, JADE2 and JADE3.

Its function is as follows. Scaffold subunit of some HBO1 complexes, which have a histone H4 acetyltransferase activity. The sequence is that of Protein Jade-3 (Jade3) from Mus musculus (Mouse).